The sequence spans 92 residues: MGRSLKKGPFVADHLLKKIEKLNDNNRKEVIKTWSRASTILPLMVGHTIAVHNGRQHVPVFVNEQMVGHKLGEFAPTRTYRGHGKSDKKAGR.

The protein belongs to the universal ribosomal protein uS19 family.

Its function is as follows. Protein S19 forms a complex with S13 that binds strongly to the 16S ribosomal RNA. The protein is Small ribosomal subunit protein uS19 of Nostoc punctiforme (strain ATCC 29133 / PCC 73102).